A 524-amino-acid chain; its full sequence is Xanthotoxin 5-hydroxylase CYP82C4 (524 aa).

A helical transmembrane segment spans residues 1–21; that stretch reads MDTSLFSLFVPILVFVFIALF. Cys463 contacts heme.

This sequence belongs to the cytochrome P450 family. Heme serves as cofactor. In terms of tissue distribution, expressed in both primary and lateral roots under iron-deficient conditions, except in apical root zones, and mostly in the root epidermal layer.

Its subcellular location is the membrane. It carries out the reaction fraxetin + reduced [NADPH--hemoprotein reductase] + O2 = sideretin (reduced form) + oxidized [NADPH--hemoprotein reductase] + H2O + H(+). The catalysed reaction is xanthotoxin + reduced [NADPH--hemoprotein reductase] + O2 = 5-hydroxyxanthotoxin + oxidized [NADPH--hemoprotein reductase] + H2O + 2 H(+). It participates in phenylpropanoid metabolism. Functionally, can hydroxylate xanthotoxin (8-methoxypsoralen) to form 5-hydroxyxanthotoxin (5-hydroxy-8-methoxypsoralen) in vivo and in vitro. Involved in the early iron deficiency response, possibly through an IDE1-like mediated pathway. Involved in the pathway of sideretin biosynthesis from feruloyl CoA, a redox-active catecholic metabolite exuded by roots in response to iron deficiency in order to facilitate the uptake of iron; this pathway consists in the successive conversion from feruloyl CoA to scopoletin, from scopoletin to fraxetin and from fraxetin to sideretin. Catalyzes the biosynthesis of sideretin via fraxetin hydroxylation. The protein is Xanthotoxin 5-hydroxylase CYP82C4 of Arabidopsis thaliana (Mouse-ear cress).